Here is a 465-residue protein sequence, read N- to C-terminus: MERSGTTPRFAQNPVVNDTGLLEALSHFNREKIPERVVHAKGTGAYGEFEVTDDISDICNIDMLLGVGKKTPCVGRFSTTGLERGSAEGIRDVKGLGLKFDTKEGNWDWVCINFPYFFIRDPAKFPDLMHAQQRDPKTNLLNPNMYWDWVADNPESLHLVLTLFSKLGTMFNWRTMSAYLGHAYKWTMPDGSFKYVHVYLSPNGGPSNENASMDDAMDENINDPDGASRDLYEAIERGDFPTWTAYAQVVDPEDAPDLDFNILDMTKHWNYGFYPKNGSVIPKRAFGTLTLNRNPEKYFSEIECLTFSPSNLVPGVLPSEDPILQARMFAYPDAQRYRLGVNPENPPARPKKPLSLKPGSQKFDEWVSQVSSPAWSEAKEDDYEFARELYEWYPQFRDQEFQNELIDNLAESISQTCDAVRQKVYRTFALVSTDLADRVREGVEKRLETAATNSTPQELPGRARL.

His-39 is an active-site residue. Tyr-331 is a binding site for heme.

The protein belongs to the catalase family. Requires heme as cofactor.

The protein operates within alkaloid biosynthesis. Catalase; part of the gene cluster that mediates the biosynthesis of communesins, a prominent class of indole alkaloids with great potential as pharmaceuticals. Communesins are biosynthesized by the coupling of tryptamine and aurantioclavine, two building blocks derived from L-tryptophan. The L-tryptophan decarboxylase cnsB converts L-tryptophan to tryptamine, whereas the tryptophan dimethylallyltransferase cnsF converts L-tryptophan to 4-dimethylallyl tryptophan which is further transformed to aurantioclavine by the aurantioclavine synthase cnsA, probably aided by the catalase cnsD. The cytochrome P450 monooxygenase cnsC catalyzes the heterodimeric coupling between the two different indole moieties, tryptamine and aurantioclavine, to construct vicinal quaternary stereocenters and yield the heptacyclic communesin scaffold. The O-methyltransferase cnsE then methylates the communesin scaffold to produce communesin K, the simplest characterized communesin that contains the heptacyclic core. The dioxygenase cnsJ converts communesin K into communesin I. Acylation to introduce the hexadienyl group at position N16 of communesin I by the acyltransferase cnsK leads to the production of communesin B. The hexadienyl group is produced by the highly reducing polyketide synthase cnsI, before being hydrolytically removed from cnsI by the serine hydrolase cnsH, converted into hexadienyl-CoA by the CoA ligase cnsG, and then transferred to communesin I by cnsK. Surprisingly, cnsK may also be a promiscuous acyltransferase that can tolerate a range of acyl groups, including acetyl-, propionyl-, and butyryl-CoA, which lead to communesins A, G and H respectively. The roles of the alpha-ketoglutarate-dependent dioxygenases cnsM and cnsP have still to be determined. The protein is Catalase cnsD of Penicillium expansum (Blue mold rot fungus).